The chain runs to 612 residues: uncharacterized protein (612 aa).

Over residues 176–196 (LVQRNNATTSPTTDSASENNE) the composition is skewed to polar residues. The segment at 176-203 (LVQRNNATTSPTTDSASENNESVPSLTS) is disordered.

To yeast YNL034w.

This is an uncharacterized protein from Saccharomyces cerevisiae (strain ATCC 204508 / S288c) (Baker's yeast).